A 156-amino-acid chain; its full sequence is MPRKGPAPKRPLVNDPVYGSQLVTQLVNKILLKGKKSLAERIVYGALEHARDKTGTDPVITLKRALDNVKPALEVRSRRVGGATYQVPVEVRPDRSTTLALRWLVGFSRQRREKTMIERLANEILDASNGLGASVKRREDTHKMAEANRAFAHYRW.

It belongs to the universal ribosomal protein uS7 family. In terms of assembly, part of the 30S ribosomal subunit. Contacts proteins S9 and S11.

In terms of biological role, one of the primary rRNA binding proteins, it binds directly to 16S rRNA where it nucleates assembly of the head domain of the 30S subunit. Is located at the subunit interface close to the decoding center, probably blocks exit of the E-site tRNA. In Mycobacterium leprae (strain Br4923), this protein is Small ribosomal subunit protein uS7.